The following is a 371-amino-acid chain: Regulatory protein RapK (371 aa).

TPR repeat units follow at residues 7 to 42, 93 to 130, 175 to 208, 215 to 248, 254 to 290, and 331 to 364; these read EVVATTLNDWYIAIKKQKVDESIKYYSEIKKLFDEM, EYNFYLFEAMYEAYNKNYDRAINLYGLAEKKLAEIPDE, ATSTMIAAANYADMKRFEEAEQYYLEAIDIAKET, AQLFHNLSIVYSDWNKPDKCIESLEKAIGNESWL, INSLFMMIKELFKIDEKMKAINFYNKAQERLILMENK, and DELSYIAAKRFESIGAFEEATSFFNAKIWAEQKM.

The protein belongs to the Rap family.

It is found in the cytoplasm. Inhibited by PhrK, which prevents RapK-ComA interaction. In terms of biological role, involved in the regulation of genetic competence development. Inhibits the activity of ComA, a transcriptional factor that regulates the development of genetic competence. Likely affects the activity of additional regulators, in particular Spo0A. The sequence is that of Regulatory protein RapK (rapK) from Bacillus subtilis (strain 168).